A 39-amino-acid chain; its full sequence is Cytochrome b559 subunit beta (39 aa).

Residues 14–30 traverse the membrane as a helical segment; sequence WLAVHGLAVPTVFFLGS. A heme-binding site is contributed by His18.

It belongs to the PsbE/PsbF family. As to quaternary structure, heterodimer of an alpha subunit and a beta subunit. PSII is composed of 1 copy each of membrane proteins PsbA, PsbB, PsbC, PsbD, PsbE, PsbF, PsbH, PsbI, PsbJ, PsbK, PsbL, PsbM, PsbT, PsbX, PsbY, PsbZ, Psb30/Ycf12, at least 3 peripheral proteins of the oxygen-evolving complex and a large number of cofactors. It forms dimeric complexes. Requires heme b as cofactor.

It localises to the plastid. The protein localises to the chloroplast thylakoid membrane. This b-type cytochrome is tightly associated with the reaction center of photosystem II (PSII). PSII is a light-driven water:plastoquinone oxidoreductase that uses light energy to abstract electrons from H(2)O, generating O(2) and a proton gradient subsequently used for ATP formation. It consists of a core antenna complex that captures photons, and an electron transfer chain that converts photonic excitation into a charge separation. The protein is Cytochrome b559 subunit beta of Welwitschia mirabilis (Tree tumbo).